The chain runs to 100 residues: Large ribosomal subunit protein uL23 (100 aa).

Belongs to the universal ribosomal protein uL23 family. Part of the 50S ribosomal subunit. Contacts protein L29, and trigger factor when it is bound to the ribosome.

One of the early assembly proteins it binds 23S rRNA. One of the proteins that surrounds the polypeptide exit tunnel on the outside of the ribosome. Forms the main docking site for trigger factor binding to the ribosome. The sequence is that of Large ribosomal subunit protein uL23 from Mycobacterium sp. (strain JLS).